The chain runs to 859 residues: Outer membrane usher protein AfaC (859 aa).

Positions 1-28 (MRDTSSGRMRTGVTGLALAVMVACVMFR) are cleaved as a signal peptide.

It belongs to the fimbrial export usher family.

The protein localises to the cell outer membrane. In terms of biological role, involved in the export and assembly of AFA-III afimbrial adhesin subunits across the outer membrane. The sequence is that of Outer membrane usher protein AfaC (afaC) from Escherichia coli.